Consider the following 296-residue polypeptide: Iron-sulfur cluster carrier protein (296 aa).

A compositionally biased stretch (low complexity) spans 1–17; the sequence is MSSNPFRIQNPQPQPQR. The interval 1–23 is disordered; sequence MSSNPFRIQNPQPQPQRQPRDLR. Residue 52-59 participates in ATP binding; that stretch reads GKGGVGKS.

The protein belongs to the Mrp/NBP35 ATP-binding proteins family. Homodimer.

Binds and transfers iron-sulfur (Fe-S) clusters to target apoproteins. Can hydrolyze ATP. The protein is Iron-sulfur cluster carrier protein of Saccharolobus solfataricus (strain ATCC 35092 / DSM 1617 / JCM 11322 / P2) (Sulfolobus solfataricus).